The following is a 309-amino-acid chain: MQQEILKIATRQSPLALWQANFVKDRLTEIYPDLTVELVPMVTKGDVILDTPLAKIGGKGLFVKELENALLNGDADIAVHSMKDVPMEFPAGLGLSVICKREDPRDAFVSNRYRTLDDLPPGAIVGTSSLRRQCQLKKRRPDLNIRSLRGNVGTRLSKLDQGDYDAIILASAGLIRLALPERIASFIETEISLPAAGQGAVGIECRINDQRVQKLLAPLADTETTACVLAERAMNNRLQGGCQVPIGGYAVLNGNELHLRALVGALDGSKIIRAEGKSAVENAEVLGIQIAESLLAQGADKILAEVYNG.

The residue at position 242 (Cys242) is an S-(dipyrrolylmethanemethyl)cysteine.

This sequence belongs to the HMBS family. In terms of assembly, monomer. Requires dipyrromethane as cofactor.

The enzyme catalyses 4 porphobilinogen + H2O = hydroxymethylbilane + 4 NH4(+). It participates in porphyrin-containing compound metabolism; protoporphyrin-IX biosynthesis; coproporphyrinogen-III from 5-aminolevulinate: step 2/4. Tetrapolymerization of the monopyrrole PBG into the hydroxymethylbilane pre-uroporphyrinogen in several discrete steps. The polypeptide is Porphobilinogen deaminase (Actinobacillus succinogenes (strain ATCC 55618 / DSM 22257 / CCUG 43843 / 130Z)).